The chain runs to 292 residues: N-acetylneuraminate lyase (292 aa).

Residues S47 and T48 each contribute to the aceneuramate site. Catalysis depends on Y136, which acts as the Proton donor. K164 serves as the catalytic Schiff-base intermediate with substrate. Aceneuramate-binding residues include T166, G188, D190, E191, and S207.

This sequence belongs to the DapA family. NanA subfamily. Homotetramer.

It is found in the cytoplasm. It carries out the reaction aceneuramate = aldehydo-N-acetyl-D-mannosamine + pyruvate. It participates in amino-sugar metabolism; N-acetylneuraminate degradation; D-fructose 6-phosphate from N-acetylneuraminate: step 1/5. Functionally, catalyzes the reversible aldol cleavage of N-acetylneuraminic acid (sialic acid; Neu5Ac) to form pyruvate and N-acetylmannosamine (ManNAc) via a Schiff base intermediate. The protein is N-acetylneuraminate lyase of Histophilus somni (strain 129Pt) (Haemophilus somnus).